We begin with the raw amino-acid sequence, 415 residues long: Gamma-glutamyl phosphate reductase (415 aa).

This sequence belongs to the gamma-glutamyl phosphate reductase family.

It is found in the cytoplasm. It catalyses the reaction L-glutamate 5-semialdehyde + phosphate + NADP(+) = L-glutamyl 5-phosphate + NADPH + H(+). Its pathway is amino-acid biosynthesis; L-proline biosynthesis; L-glutamate 5-semialdehyde from L-glutamate: step 2/2. In terms of biological role, catalyzes the NADPH-dependent reduction of L-glutamate 5-phosphate into L-glutamate 5-semialdehyde and phosphate. The product spontaneously undergoes cyclization to form 1-pyrroline-5-carboxylate. This is Gamma-glutamyl phosphate reductase from Dictyoglomus thermophilum (strain ATCC 35947 / DSM 3960 / H-6-12).